The chain runs to 128 residues: Large ribosomal subunit protein eL8 (128 aa).

The protein belongs to the eukaryotic ribosomal protein eL8 family. In terms of assembly, part of the 50S ribosomal subunit. Probably part of the RNase P complex.

It localises to the cytoplasm. Its function is as follows. Multifunctional RNA-binding protein that recognizes the K-turn motif in ribosomal RNA, the RNA component of RNase P, box H/ACA, box C/D and box C'/D' sRNAs. This Ignicoccus hospitalis (strain KIN4/I / DSM 18386 / JCM 14125) protein is Large ribosomal subunit protein eL8.